Reading from the N-terminus, the 271-residue chain is DNA repair protein RecO (271 aa).

It belongs to the RecO family.

Functionally, involved in DNA repair and RecF pathway recombination. This Synechococcus sp. (strain CC9311) protein is DNA repair protein RecO.